The primary structure comprises 163 residues: 2,3-dimethylmalate dehydratase small subunit (163 aa).

The protein belongs to the LeuD family. LeuD type 2 subfamily. In terms of assembly, heterodimer of a large and a small subunit.

The catalysed reaction is (2R,3S)-2,3-dimethylmalate = dimethylmaleate + H2O. Its pathway is cofactor degradation; nicotinate degradation; propanoate and pyruvate from 6-hydroxynicotinate: step 7/8. In Eubacterium barkeri (Clostridium barkeri), this protein is 2,3-dimethylmalate dehydratase small subunit.